Reading from the N-terminus, the 290-residue chain is Elongation factor Ts (290 aa).

The segment at 82–85 (TDFV) is involved in Mg(2+) ion dislocation from EF-Tu.

The protein belongs to the EF-Ts family.

It is found in the cytoplasm. In terms of biological role, associates with the EF-Tu.GDP complex and induces the exchange of GDP to GTP. It remains bound to the aminoacyl-tRNA.EF-Tu.GTP complex up to the GTP hydrolysis stage on the ribosome. The protein is Elongation factor Ts of Cellvibrio japonicus (strain Ueda107) (Pseudomonas fluorescens subsp. cellulosa).